The sequence spans 389 residues: Na(+)/H(+) antiporter NhaA 1 (389 aa).

A run of 11 helical transmembrane segments spans residues 12–32 (VLNEAFGGVLLIVCTLLALLV), 62–82 (FLLWINDGLISIFFFAIGLEL), 97–117 (IVLPFMAALGGILIPAMLFAL), 128–148 (GWAIPTATDTAFALAILMMCG), 157–177 (IFLLSLAIFDDVGAILIIAIF), 184–204 (IVAFVVAGLAILAMLILNLLG), 220–240 (ISVLKSGVHATLAGIVTAFFI), 260–280 (FWIAFIILPLFAFANAGVNLS), 282–302 (IDIGAIFSGVSIGIFLGLFVG), 331–351 (LYGVCILTGIGFTMSLFIDGL), and 365–385 (LAILIASFCSGIWGFIYLKFF).

This sequence belongs to the NhaA Na(+)/H(+) (TC 2.A.33) antiporter family.

The protein resides in the cell inner membrane. The catalysed reaction is Na(+)(in) + 2 H(+)(out) = Na(+)(out) + 2 H(+)(in). Na(+)/H(+) antiporter that extrudes sodium in exchange for external protons. The protein is Na(+)/H(+) antiporter NhaA 1 of Campylobacter jejuni (strain RM1221).